Consider the following 374-residue polypeptide: Queuine tRNA-ribosyltransferase (374 aa).

Residue Asp89 is the Proton acceptor of the active site. Residues Asp89 to Phe93, Asp143, Gln187, and Gly214 contribute to the substrate site. Residues Gly245–Asp251 form an RNA binding region. The active-site Nucleophile is Asp264. Residues Thr269–Arg273 are RNA binding; important for wobble base 34 recognition. Positions 302, 304, 307, and 333 each coordinate Zn(2+).

It belongs to the queuine tRNA-ribosyltransferase family. As to quaternary structure, homodimer. Within each dimer, one monomer is responsible for RNA recognition and catalysis, while the other monomer binds to the replacement base PreQ1. The cofactor is Zn(2+).

The enzyme catalyses 7-aminomethyl-7-carbaguanine + guanosine(34) in tRNA = 7-aminomethyl-7-carbaguanosine(34) in tRNA + guanine. The protein operates within tRNA modification; tRNA-queuosine biosynthesis. Functionally, catalyzes the base-exchange of a guanine (G) residue with the queuine precursor 7-aminomethyl-7-deazaguanine (PreQ1) at position 34 (anticodon wobble position) in tRNAs with GU(N) anticodons (tRNA-Asp, -Asn, -His and -Tyr). Catalysis occurs through a double-displacement mechanism. The nucleophile active site attacks the C1' of nucleotide 34 to detach the guanine base from the RNA, forming a covalent enzyme-RNA intermediate. The proton acceptor active site deprotonates the incoming PreQ1, allowing a nucleophilic attack on the C1' of the ribose to form the product. After dissociation, two additional enzymatic reactions on the tRNA convert PreQ1 to queuine (Q), resulting in the hypermodified nucleoside queuosine (7-(((4,5-cis-dihydroxy-2-cyclopenten-1-yl)amino)methyl)-7-deazaguanosine). This is Queuine tRNA-ribosyltransferase from Shewanella baltica (strain OS185).